We begin with the raw amino-acid sequence, 483 residues long: Glutamate--tRNA ligase (483 aa).

The 'HIGH' region signature appears at 9-19; sequence PSPTGYLHIGN. Positions 250-254 match the 'KMSKS' region motif; that stretch reads KLSKR. Residue lysine 253 coordinates ATP.

Belongs to the class-I aminoacyl-tRNA synthetase family. Glutamate--tRNA ligase type 1 subfamily. Monomer.

It is found in the cytoplasm. The enzyme catalyses tRNA(Glu) + L-glutamate + ATP = L-glutamyl-tRNA(Glu) + AMP + diphosphate. Catalyzes the attachment of glutamate to tRNA(Glu) in a two-step reaction: glutamate is first activated by ATP to form Glu-AMP and then transferred to the acceptor end of tRNA(Glu). In Blochmanniella floridana, this protein is Glutamate--tRNA ligase.